The chain runs to 124 residues: Fluoride-specific ion channel FluC (124 aa).

Transmembrane regions (helical) follow at residues 4 to 24 (LLFVALGGSIGAVLRYLMSII), 35 to 55 (FGTLLVNVLGSFFMGIVYALG), 62 to 82 (PELKALVGVGLLGALTTFSTF), and 95 to 115 (WFKSLINVLLNVSLCIFMVYL). The Na(+) site is built by Gly74 and Thr77.

This sequence belongs to the fluoride channel Fluc/FEX (TC 1.A.43) family.

Its subcellular location is the cell inner membrane. It carries out the reaction fluoride(in) = fluoride(out). Na(+) is not transported, but it plays an essential structural role and its presence is essential for fluoride channel function. Its function is as follows. Fluoride-specific ion channel. Important for reducing fluoride concentration in the cell, thus reducing its toxicity. The polypeptide is Fluoride-specific ion channel FluC (Shewanella denitrificans (strain OS217 / ATCC BAA-1090 / DSM 15013)).